The chain runs to 341 residues: Alpha-ketoglutarate-dependent dioxygenase oryG (341 aa).

Histidine 100 is a binding site for substrate. Residues histidine 140 and aspartate 142 each contribute to the Fe cation site. A 2-oxoglutarate-binding site is contributed by threonine 167. Histidine 299 contributes to the Fe cation binding site. Positions 311 and 315 each coordinate 2-oxoglutarate. Arginine 315 provides a ligand contact to substrate.

It belongs to the TfdA dioxygenase family. It depends on Fe(2+) as a cofactor.

It participates in secondary metabolite biosynthesis. Alpha-ketoglutarate-dependent dioxygenase; part of the gene cluster that mediates the biosynthesis of oryzines, natural products with an unusual maleidride backbone. The two subunits of the fungal fatty acid synthase oryfasA and oryfasB probably form octenoic acid. This fatty acid is most likely activated by the acyl-CoA ligase oryP to give octenyl-CoA before the citrate synthase-like protein oryE catalyzes condensation with oxaloacetate to form tricarboxylic acid. The next steps of the pathways are conjectural, but a favorite possible route has been proposed, beginning with decarboxylation and concomitant dehydration by the decarboxylase oryM, followed by tautomerization, which may lead to the production of a diene intermediate. Reduction of this diene intermediate could give the known metabolite piliformic acid. On the pathway to oryzine B and oryzine A, however, hydroxylation of the diene by the alpha-ketoglutarate-dependent dioxygenase oryG and lactonisation by the lactonohydrolases oryH or oryL could give oryzine B directly. Finally, enoyl reduction by the dehydrogenase oryD would then convert oryzine B into oryzine A. This is Alpha-ketoglutarate-dependent dioxygenase oryG from Aspergillus oryzae (strain ATCC 42149 / RIB 40) (Yellow koji mold).